A 173-amino-acid polypeptide reads, in one-letter code: Crossover junction endodeoxyribonuclease RuvC (173 aa).

Residues Asp8, Glu69, and Asp141 contribute to the active site. The Mg(2+) site is built by Asp8, Glu69, and Asp141.

Belongs to the RuvC family. Homodimer which binds Holliday junction (HJ) DNA. The HJ becomes 2-fold symmetrical on binding to RuvC with unstacked arms; it has a different conformation from HJ DNA in complex with RuvA. In the full resolvosome a probable DNA-RuvA(4)-RuvB(12)-RuvC(2) complex forms which resolves the HJ. Requires Mg(2+) as cofactor.

Its subcellular location is the cytoplasm. It carries out the reaction Endonucleolytic cleavage at a junction such as a reciprocal single-stranded crossover between two homologous DNA duplexes (Holliday junction).. In terms of biological role, the RuvA-RuvB-RuvC complex processes Holliday junction (HJ) DNA during genetic recombination and DNA repair. Endonuclease that resolves HJ intermediates. Cleaves cruciform DNA by making single-stranded nicks across the HJ at symmetrical positions within the homologous arms, yielding a 5'-phosphate and a 3'-hydroxyl group; requires a central core of homology in the junction. The consensus cleavage sequence is 5'-(A/T)TT(C/G)-3'. Cleavage occurs on the 3'-side of the TT dinucleotide at the point of strand exchange. HJ branch migration catalyzed by RuvA-RuvB allows RuvC to scan DNA until it finds its consensus sequence, where it cleaves and resolves the cruciform DNA. This Stenotrophomonas maltophilia (strain R551-3) protein is Crossover junction endodeoxyribonuclease RuvC.